Here is a 373-residue protein sequence, read N- to C-terminus: Carbamoyl phosphate synthase small chain (373 aa).

Residues 1–179 (MSGKAQLVLE…AYIVEPEGPP (179 aa)) form a CPSase region. L-glutamine contacts are provided by serine 47, glycine 230, and glycine 232. A Glutamine amidotransferase type-1 domain is found at 182 to 373 (TVAALDLGIK…QFIELMEGDR (192 aa)). Cysteine 258 functions as the Nucleophile in the catalytic mechanism. Phenylalanine 259, glutamine 262, asparagine 300, glycine 302, and phenylalanine 303 together coordinate L-glutamine. Active-site residues include histidine 348 and glutamate 350.

This sequence belongs to the CarA family. Composed of two chains; the small (or glutamine) chain promotes the hydrolysis of glutamine to ammonia, which is used by the large (or ammonia) chain to synthesize carbamoyl phosphate. Tetramer of heterodimers (alpha,beta)4.

The catalysed reaction is hydrogencarbonate + L-glutamine + 2 ATP + H2O = carbamoyl phosphate + L-glutamate + 2 ADP + phosphate + 2 H(+). The enzyme catalyses L-glutamine + H2O = L-glutamate + NH4(+). Its pathway is amino-acid biosynthesis; L-arginine biosynthesis; carbamoyl phosphate from bicarbonate: step 1/1. The protein operates within pyrimidine metabolism; UMP biosynthesis via de novo pathway; (S)-dihydroorotate from bicarbonate: step 1/3. Its function is as follows. Small subunit of the glutamine-dependent carbamoyl phosphate synthetase (CPSase). CPSase catalyzes the formation of carbamoyl phosphate from the ammonia moiety of glutamine, carbonate, and phosphate donated by ATP, constituting the first step of 2 biosynthetic pathways, one leading to arginine and/or urea and the other to pyrimidine nucleotides. The small subunit (glutamine amidotransferase) binds and cleaves glutamine to supply the large subunit with the substrate ammonia. The sequence is that of Carbamoyl phosphate synthase small chain from Mycolicibacterium paratuberculosis (strain ATCC BAA-968 / K-10) (Mycobacterium paratuberculosis).